A 548-amino-acid chain; its full sequence is Membrane protein insertase YidC (548 aa).

The helical transmembrane segment at 6 to 26 threads the bilayer; the sequence is NLLVIALLFVSFMIWQAWEQD. The interval 28–56 is disordered; the sequence is NPQPQTQQTTQTTTTAAGSAADQGVPASG. Over residues 29–42 the composition is skewed to low complexity; that stretch reads PQPQTQQTTQTTTT. 4 helical membrane passes run 350–370, 424–444, 458–478, and 499–519; these read FVGN…GIMY, FPLI…MGSI, LSAQ…MFFI, and PVIF…YYIV.

Belongs to the OXA1/ALB3/YidC family. Type 1 subfamily. In terms of assembly, interacts with the Sec translocase complex via SecD. Specifically interacts with transmembrane segments of nascent integral membrane proteins during membrane integration.

The protein resides in the cell inner membrane. Functionally, required for the insertion and/or proper folding and/or complex formation of integral membrane proteins into the membrane. Involved in integration of membrane proteins that insert both dependently and independently of the Sec translocase complex, as well as at least some lipoproteins. Aids folding of multispanning membrane proteins. This Salmonella choleraesuis (strain SC-B67) protein is Membrane protein insertase YidC.